The chain runs to 91 residues: Acyl carrier protein (91 aa).

In terms of domain architecture, Carrier spans 4–79 (QQILDKVQSI…QAVDYILQHK (76 aa)). The residue at position 39 (Ser39) is an O-(pantetheine 4'-phosphoryl)serine.

The protein belongs to the acyl carrier protein (ACP) family. Post-translationally, 4'-phosphopantetheine is transferred from CoA to a specific serine of apo-ACP by AcpS. This modification is essential for activity because fatty acids are bound in thioester linkage to the sulfhydryl of the prosthetic group.

Its subcellular location is the plastid. It localises to the chloroplast. Its pathway is lipid metabolism; fatty acid biosynthesis. Its function is as follows. Carrier of the growing fatty acid chain in fatty acid biosynthesis. The protein is Acyl carrier protein of Cyanidioschyzon merolae (strain NIES-3377 / 10D) (Unicellular red alga).